The primary structure comprises 702 residues: Polyribonucleotide nucleotidyltransferase 3 (702 aa).

Mg(2+) is bound by residues Asp483 and Asp489. Residues 550 to 609 (PKVTQIKVHPDKVREVIGAGGKVINKIIDETGCKITIENDGTIYVAAPDQESSRRAVEMI) enclose the KH domain. Residues 619 to 687 (GEVYTGKVIK…PQGKIGLSRK (69 aa)) enclose the S1 motif domain.

This sequence belongs to the polyribonucleotide nucleotidyltransferase family. It depends on Mg(2+) as a cofactor.

Its subcellular location is the cytoplasm. The catalysed reaction is RNA(n+1) + phosphate = RNA(n) + a ribonucleoside 5'-diphosphate. In terms of biological role, involved in mRNA degradation. Catalyzes the phosphorolysis of single-stranded polyribonucleotides processively in the 3'- to 5'-direction. The protein is Polyribonucleotide nucleotidyltransferase 3 of Alkaliphilus metalliredigens (strain QYMF).